The sequence spans 350 residues: Arabinogalactan endo-beta-1,4-galactanase (350 aa).

A signal peptide spans 1 to 16 (MFASLLLAALPLLTHA). N-linked (GlcNAc...) asparagine glycosylation is present at Asn128. The active-site Proton donor is the Glu152. Residue Glu262 is the Nucleophile of the active site.

This sequence belongs to the glycosyl hydrolase 53 family. Glycosylated.

It catalyses the reaction The enzyme specifically hydrolyzes (1-&gt;4)-beta-D-galactosidic linkages in type I arabinogalactans.. This is Arabinogalactan endo-beta-1,4-galactanase (gal1) from Aspergillus aculeatus.